The following is a 332-amino-acid chain: Ubiquinone biosynthesis protein COQ4, mitochondrial (332 aa).

A mitochondrion-targeting transit peptide spans 1–16 (MFTVSKKSLQASRNAF). 4 residues coordinate Zn(2+): His-212, Asp-213, His-216, and Glu-228.

It belongs to the COQ4 family. As to quaternary structure, component of a multi-subunit COQ enzyme complex, composed of at least COQ3, COQ4, COQ5, COQ6, COQ7 and COQ9. It depends on Zn(2+) as a cofactor.

It is found in the mitochondrion inner membrane. The enzyme catalyses a 4-hydroxy-3-methoxy-5-(all-trans-polyprenyl)benzoate + H(+) = a 2-methoxy-6-(all-trans-polyprenyl)phenol + CO2. It participates in cofactor biosynthesis; ubiquinone biosynthesis. In terms of biological role, lyase that catalyzes the C1-decarboxylation of 4-hydroxy-3-methoxy-5-(all-trans-polyprenyl)benzoic acid into 2-methoxy-6-(all-trans-polyprenyl)phenol during ubiquinone biosynthesis. This Kluyveromyces lactis (strain ATCC 8585 / CBS 2359 / DSM 70799 / NBRC 1267 / NRRL Y-1140 / WM37) (Yeast) protein is Ubiquinone biosynthesis protein COQ4, mitochondrial.